The sequence spans 660 residues: Poly [ADP-ribose] polymerase 2-A (660 aa).

Residues 2–36 enclose the SAP 1 domain; sequence SARLRVEELRAELQRRGLDASGNKPVLVRRLDAAI. Residues 40-92 are disordered; the sequence is EEEEAAVSAAAKEEADAGGVVDGEGNGEDKRKRKRRGDGEDVDNSESDAAKLE. The short motif at 69–75 is the Nuclear localization signal element; it reads KRKRKRR. The region spanning 91–125 is the SAP 2 domain; sequence LEGMSYRELQALAKSRGLAANGSKKEVIERLLCAP. The WGR domain occupies 179–281; it reads TYHVLQVWFL…KSFECYARKY (103 aa). In terms of domain architecture, PARP alpha-helical spans 308–426; that stretch reads ETKLETRIAS…EIEIATKLLE (119 aa). Positions 434–660 constitute a PARP catalytic domain; sequence DPLYARYKQL…LHVSFNFKKR (227 aa).

This sequence belongs to the ARTD/PARP family.

The protein resides in the nucleus. The catalysed reaction is NAD(+) + (ADP-D-ribosyl)n-acceptor = nicotinamide + (ADP-D-ribosyl)n+1-acceptor + H(+).. The enzyme catalyses L-aspartyl-[protein] + NAD(+) = 4-O-(ADP-D-ribosyl)-L-aspartyl-[protein] + nicotinamide. It catalyses the reaction L-glutamyl-[protein] + NAD(+) = 5-O-(ADP-D-ribosyl)-L-glutamyl-[protein] + nicotinamide. Involved in the base excision repair (BER) pathway, by catalyzing the poly(ADP-ribosyl)ation of a limited number of acceptor proteins involved in chromatin architecture and in DNA metabolism. This modification follows DNA damages and appears as an obligatory step in a detection/signaling pathway leading to the reparation of DNA strand breaks. The sequence is that of Poly [ADP-ribose] polymerase 2-A (PARP2-A) from Oryza sativa subsp. japonica (Rice).